A 316-amino-acid chain; its full sequence is Beta-ketoacyl-[acyl-carrier-protein] synthase III 1 (316 aa).

Residues Cys112 and His243 contribute to the active site. The interval 244-248 is ACP-binding; sequence QANYR. Residue Asn273 is part of the active site.

Belongs to the thiolase-like superfamily. FabH family. Homodimer.

The protein localises to the cytoplasm. It carries out the reaction malonyl-[ACP] + acetyl-CoA + H(+) = 3-oxobutanoyl-[ACP] + CO2 + CoA. The protein operates within lipid metabolism; fatty acid biosynthesis. Its function is as follows. Catalyzes the condensation reaction of fatty acid synthesis by the addition to an acyl acceptor of two carbons from malonyl-ACP. Catalyzes the first condensation reaction which initiates fatty acid synthesis and may therefore play a role in governing the total rate of fatty acid production. Possesses both acetoacetyl-ACP synthase and acetyl transacylase activities. Its substrate specificity determines the biosynthesis of branched-chain and/or straight-chain of fatty acids. The polypeptide is Beta-ketoacyl-[acyl-carrier-protein] synthase III 1 (Vibrio cholerae serotype O1 (strain ATCC 39315 / El Tor Inaba N16961)).